The following is a 475-amino-acid chain: Cytosolic non-specific dipeptidase (475 aa).

At A2 the chain carries N-acetylalanine. Position 9 is an N6-acetyllysine (K9). S58 bears the Phosphoserine mark. H99 serves as a coordination point for Mn(2+). Residue D101 is part of the active site. D132 lines the Mn(2+) pocket. Catalysis depends on E166, which acts as the Proton acceptor. Residues 166–167, D195, and H228 each bind substrate; that span reads EE. Residues E167 and D195 each contribute to the Mn(2+) site. Residue S299 is modified to Phosphoserine. Substrate contacts are provided by T330, R343, S417, and H445. Mn(2+) is bound at residue H445.

This sequence belongs to the peptidase M20A family. In terms of assembly, homodimer. Mn(2+) is required as a cofactor.

Its subcellular location is the cytoplasm. It catalyses the reaction Hydrolysis of dipeptides, preferentially hydrophobic dipeptides including prolyl amino acids.. The enzyme catalyses L-threonyl-L-threonine + H2O = 2 L-threonine. The catalysed reaction is L-threonyl-L-serine + H2O = L-threonine + L-serine. It carries out the reaction L-seryl-L-threonine + H2O = L-threonine + L-serine. It catalyses the reaction L-cysteinylglycine + H2O = L-cysteine + glycine. The enzyme catalyses (S)-lactate + L-phenylalanine = N-[(S)-lactoyl]-L-phenylalanine + H2O. In terms of biological role, catalyzes the peptide bond hydrolysis in dipeptides, displaying a non-redundant activity toward threonyl dipeptides. Mediates threonyl dipeptide catabolism in a tissue-specific way. Has high dipeptidase activity toward cysteinylglycine, an intermediate metabolite in glutathione metabolism. Metabolizes N-lactoyl-amino acids, both through hydrolysis to form lactic acid and amino acids, as well as through their formation by reverse proteolysis. Plays a role in the regulation of cell cycle arrest and apoptosis. This Pongo abelii (Sumatran orangutan) protein is Cytosolic non-specific dipeptidase (CNDP2).